A 323-amino-acid chain; its full sequence is o-succinylbenzoate synthase (323 aa).

Lys-134 serves as the catalytic Proton donor. 3 residues coordinate Mg(2+): Asp-162, Glu-191, and Asp-214. Lys-236 (proton acceptor) is an active-site residue.

Belongs to the mandelate racemase/muconate lactonizing enzyme family. MenC type 1 subfamily. A divalent metal cation serves as cofactor.

The catalysed reaction is (1R,6R)-6-hydroxy-2-succinyl-cyclohexa-2,4-diene-1-carboxylate = 2-succinylbenzoate + H2O. The protein operates within quinol/quinone metabolism; 1,4-dihydroxy-2-naphthoate biosynthesis; 1,4-dihydroxy-2-naphthoate from chorismate: step 4/7. It participates in quinol/quinone metabolism; menaquinone biosynthesis. In terms of biological role, converts 2-succinyl-6-hydroxy-2,4-cyclohexadiene-1-carboxylate (SHCHC) to 2-succinylbenzoate (OSB). The sequence is that of o-succinylbenzoate synthase from Yersinia enterocolitica serotype O:8 / biotype 1B (strain NCTC 13174 / 8081).